A 60-amino-acid chain; its full sequence is Large ribosomal subunit protein uL30 (60 aa).

The protein belongs to the universal ribosomal protein uL30 family. In terms of assembly, part of the 50S ribosomal subunit.

This is Large ribosomal subunit protein uL30 from Nocardioides sp. (strain ATCC BAA-499 / JS614).